Consider the following 396-residue polypeptide: MGKEKFSRSKPHVNVGTIGHVDHGKTTLTAAITSVLAAKFGGTAKAYDQIDAAPEEKARGITINTAHVEYETANRHYAHVDCPGHADYVKNMITGAAQMDGAILVVSAADGPMPQTREHILLARQVGVPYIIVFLNKCDMVDDAELLELVEMEVRELLDKYEFPGDTTPIIHGSAKLAMEGDKGPMGEQAIMKLADALDSYIPLPERAIDGAFLMPVEDVFSISGRGTVVTGRVERGIIKVGEEIEIVGIHDTQKTTCTGVEMFRKLLDQGQAGDNVGILLRGTKREDVQRGQVLCKPGSIKPHTHFTGEIYVLSKDEGGRHTPFFNNYRPQFYFRTTDVTGAIELPEGKEMVMPGDNVSIIVKLINPIAMEEGLRFAIREGGKTVGAGVVAKVIA.

Positions K10–E206 constitute a tr-type G domain. The tract at residues G19 to T26 is G1. A GTP-binding site is contributed by G19–T26. T26 contacts Mg(2+). Positions G60–N64 are G2. Positions D81–G84 are G3. Residues D81–H85 and N136–D139 contribute to the GTP site. Residues N136–D139 form a G4 region. The G5 stretch occupies residues S174–K176.

Belongs to the TRAFAC class translation factor GTPase superfamily. Classic translation factor GTPase family. EF-Tu/EF-1A subfamily. As to quaternary structure, monomer.

The protein resides in the cytoplasm. It catalyses the reaction GTP + H2O = GDP + phosphate + H(+). In terms of biological role, GTP hydrolase that promotes the GTP-dependent binding of aminoacyl-tRNA to the A-site of ribosomes during protein biosynthesis. The polypeptide is Elongation factor Tu 2 (Albidiferax ferrireducens (strain ATCC BAA-621 / DSM 15236 / T118) (Rhodoferax ferrireducens)).